The chain runs to 498 residues: RuvB-like helicase 2 (498 aa).

79 to 86 (GPPSTGKT) lines the ATP pocket. The disordered stretch occupies residues 458–498 (VTIGQESTDGSTQPQAKQQEVAQPEATQPQSQPEDDKMETD). A compositionally biased stretch (polar residues) spans 461-489 (GQESTDGSTQPQAKQQEVAQPEATQPQSQ).

It belongs to the RuvB family. In terms of assembly, may form heterododecamers with RVB1. Component of the SWR1 chromatin remodeling complex, the INO80 chromatin remodeling complex, and of the R2TP complex.

Its subcellular location is the nucleus. The enzyme catalyses ATP + H2O = ADP + phosphate + H(+). Its function is as follows. DNA helicase which participates in several chromatin remodeling complexes, including the SWR1 and the INO80 complexes. The SWR1 complex mediates the ATP-dependent exchange of histone H2A for the H2A variant HZT1 leading to transcriptional regulation of selected genes by chromatin remodeling. The INO80 complex remodels chromatin by shifting nucleosomes and is involved in DNA repair. Also involved in pre-rRNA processing. The sequence is that of RuvB-like helicase 2 (RVB2) from Candida albicans (strain SC5314 / ATCC MYA-2876) (Yeast).